A 283-amino-acid polypeptide reads, in one-letter code: MKIAKILNNNVVTVMDEQNNEQVVMGRGLGFKKRPGDTVNAALIEKIFSLRSSELTARLSDVLERIPLEVVTTADRIIALAKEKLGGNLQNSLYISLTDHCHFAIERHRQGVDIRNGLQWEVKRLYQKEFAIGLDALDIIHRRLGVRLPEDEAGFIALHLVNAQLDSHMPEVMRITRVMQEILNIVKYQLNLDYNEQAFSYHRFVTHLKFFAQRLLGRTPVFSEDESLHDVVKEKYTLAYHCAEKIQDHIMLHYDYTLTKEELMFLAIHIERVRSELQEQTAE.

2 PRD domains span residues 65–170 (RIPL…SHMP) and 171–280 (EVMR…LQEQ).

It belongs to the transcriptional antiterminator BglG family. In terms of processing, phosphorylated and inactivated by ArbF (EII-Bgl). The degree of phosphorylation is dependent on the presence or absence of beta-glucosides which act as inducers of the operon expression. Addition of inducer result in the rapid dephosphorylation of ArbG.

Mediates the positive regulation of the beta-glucoside (arb) operon by functioning as a transcriptional antiterminator. This is an RNA-binding protein that recognizes a specific sequence located just upstream of two termination sites within the operon. The chain is Beta-glucoside operon antiterminator (arbG) from Dickeya chrysanthemi (Pectobacterium chrysanthemi).